Reading from the N-terminus, the 419-residue chain is UDP-N-acetylglucosamine 1-carboxyvinyltransferase (419 aa).

22–23 (KN) is a phosphoenolpyruvate binding site. R95 provides a ligand contact to UDP-N-acetyl-alpha-D-glucosamine. C119 functions as the Proton donor in the catalytic mechanism. Residue C119 is modified to 2-(S-cysteinyl)pyruvic acid O-phosphothioketal. Residues 164-167 (KVSV), D308, and I330 contribute to the UDP-N-acetyl-alpha-D-glucosamine site.

It belongs to the EPSP synthase family. MurA subfamily.

The protein resides in the cytoplasm. The enzyme catalyses phosphoenolpyruvate + UDP-N-acetyl-alpha-D-glucosamine = UDP-N-acetyl-3-O-(1-carboxyvinyl)-alpha-D-glucosamine + phosphate. The protein operates within cell wall biogenesis; peptidoglycan biosynthesis. In terms of biological role, cell wall formation. Adds enolpyruvyl to UDP-N-acetylglucosamine. This is UDP-N-acetylglucosamine 1-carboxyvinyltransferase from Rickettsia felis (strain ATCC VR-1525 / URRWXCal2) (Rickettsia azadi).